Here is a 300-residue protein sequence, read N- to C-terminus: Phospholipase A1 (300 aa).

C4 and C87 are oxidised to a cystine. S137 acts as the Nucleophile in catalysis. D165 acts as the Charge relay system in catalysis. 2 cysteine pairs are disulfide-bonded: C176–C181 and C218–C227. The Charge relay system role is filled by H229. Intrachain disulfides connect C244/C268, C245/C293, and C261/C266.

Belongs to the AB hydrolase superfamily. Lipase family. Expressed by the venom gland.

It is found in the secreted. It catalyses the reaction a 1,2-diacyl-sn-glycero-3-phosphocholine + H2O = a 2-acyl-sn-glycero-3-phosphocholine + a fatty acid + H(+). Local inflammatory effects are inhibited by antiserotonin drugs (cyproheptadine and methysergide), indomethacin, betamethasone, and antihistamine (chlorpheniramine). Catalyzes the hydrolysis of phosphatidylcholine with phospholipase A1 activity. Shows potent hemolytic activity that is responsible for its lethal effect. May act as an allergen. In vivo, induces local inflammatory effects. This is Phospholipase A1 from Vespa basalis (Hornet).